The sequence spans 592 residues: Cell division protein FtsZ (592 aa).

Residues 24 to 28, 111 to 113, Glu142, Arg146, and Asp190 contribute to the GTP site; these read GGGGN and GTG. A disordered region spans residues 333-362; it reads KFQKSVSSVRKNDSGINQTASHPQSSQLRS.

Belongs to the FtsZ family. Homodimer. Polymerizes to form a dynamic ring structure in a strictly GTP-dependent manner. Interacts directly with several other division proteins.

It is found in the cytoplasm. Essential cell division protein that forms a contractile ring structure (Z ring) at the future cell division site. The regulation of the ring assembly controls the timing and the location of cell division. One of the functions of the FtsZ ring is to recruit other cell division proteins to the septum to produce a new cell wall between the dividing cells. Binds GTP and shows GTPase activity. In Bartonella bacilliformis, this protein is Cell division protein FtsZ.